A 414-amino-acid polypeptide reads, in one-letter code: MATKESKYERVEKVNVDADGATLVKNIGEDRGKEDPGMNFQDKRPANLVPGAPAGVIPNRIESLPTDRAGQRLREHLSESERLRVSRSSTSSKSSSFVEPSLKYRGEIGPIGKNGEFVASSNRQNSSSNVSSSDNSERASPASRNSNPGMNNGMTTQRTTVITESSVQGLGAQRTVPIQPHQQREDHEVITHESHARAPETTVVTIPTTRFESAQLESRRDGRTYTEDKELTIPAPVVAPQIHAHQQVNMSGGTSATIHATTDLHLASEAQINDMGPEEYERYRAKVEALARIHEDETSRKAAAYRNAVEADAELIRQTLERQHMRDIEFRKDLVESSVDRQQQEIRLEAEYAMRALEQERVNARAALDQAMASTNIDVNIDSAIGTTHSQGRVTTTSESRTSQARGPATAAVI.

2 stretches are compositionally biased toward basic and acidic residues: residues 27-45 (IGED…DKRP) and 69-84 (AGQR…ERLR). Residues 27 to 155 (IGEDRGKEDP…SNPGMNNGMT (129 aa)) are disordered. Low complexity-rich tracts occupy residues 86–101 (SRSS…VEPS) and 120–134 (SSNR…SSSD). Residues 142–155 (ASRNSNPGMNNGMT) show a composition bias toward polar residues. CAHS motif regions lie at residues 305–323 (YRNA…LERQ) and 342–360 (QQQE…LEQE). Residues 341–376 (RQQQEIRLEAEYAMRALEQERVNARAALDQAMASTN) are a coiled coil. Over residues 388–405 (THSQGRVTTTSESRTSQA) the composition is skewed to polar residues. The disordered stretch occupies residues 388-414 (THSQGRVTTTSESRTSQARGPATAAVI).

This sequence belongs to the Cytosolic-abundant heat soluble protein (CAHS) family.

Its subcellular location is the cytoplasm. Its function is as follows. CAHS proteins are cytosolic heat soluble proteins that seem to contribute to the anhydrobiosis in tardigrades, but their specific mechanisms are yet to be identified. It is possible that protection during anhydrobiosis might occur via the stabilization of vitrifying small molecules such as sugars, but not via the direct glass transition of CAHS proteins themselves. The protein is Cytosolic-abundant heat soluble protein 89226 of Hypsibius exemplaris (Freshwater tardigrade).